The sequence spans 447 residues: MNGAGGNHQQQQQQQQRLRQQQQQQALLMQQALQQQQQYQSGVLAAAAAAAMTQMEPISNGNLPPGFDPSTCRSVYVGNVHPNVTESLLIEVFQSSGLVERCKLIRKEKSSFGFVDYYDRRSAALAIMTLHGRHICGQAIKVNWAYASTQREDTSGHFHIFVGDLSSEVNDATLYACFSAYPSCSDARVMWDNKTGRSRGYGFVSFRNQQEAETAITEMTGKWLGSRQIRCNWATKNNAEEKQETDNHNAVVLTNGSSSNPGMEASQDTGSKENPENNPDCTTVYVGNLGHEVNRDELHRHFYNLGVGAIEEVRVQQDKGFGFVRYSNHGEAALAIQMANGLVVRGKPIKCSWGNKPTPPGTSSKPLPPPLPSYQPVPMAGVPQGFSAADIVAYQRQLTLSQVAAGQIAGQHGLAGQVSAGLLAAGSQALYDGYPNQSSAQQLMYYN.

2 consecutive RRM domains span residues 73–147 (RSVY…WAYA) and 158–236 (FHIF…WATK). A compositionally biased stretch (polar residues) spans 254-269 (TNGSSSNPGMEASQDT). Disordered stretches follow at residues 254–279 (TNGS…ENNP) and 353–372 (WGNK…PPLP). The RRM 3 domain occupies 282–356 (TTVYVGNLGH…KPIKCSWGNK (75 aa)).

Interacts with RBP-P.

In terms of biological role, RNA-binding protein. The polypeptide is RNA-binding protein 208 (Oryza sativa subsp. japonica (Rice)).